Here is a 119-residue protein sequence, read N- to C-terminus: Large ribosomal subunit protein bL20 (119 aa).

Belongs to the bacterial ribosomal protein bL20 family.

Its function is as follows. Binds directly to 23S ribosomal RNA and is necessary for the in vitro assembly process of the 50S ribosomal subunit. It is not involved in the protein synthesizing functions of that subunit. In Anoxybacillus flavithermus (strain DSM 21510 / WK1), this protein is Large ribosomal subunit protein bL20.